A 281-amino-acid polypeptide reads, in one-letter code: Putative outer membrane protein BBA52 (281 aa).

The segment at 162-281 is disordered; the sequence is KRISDNQSKL…FFDSLEDQFI (120 aa). Residues 179–196 show a composition bias toward polar residues; that stretch reads NKSVGSKFSKNSRPSKSP. A compositionally biased stretch (acidic residues) spans 219–249; that stretch reads EFLDDPSQESDELEREYQDDELESEDPDDGE. A compositionally biased stretch (basic and acidic residues) spans 250–262; the sequence is REYQDDRESRDDT. Positions 263–281 are enriched in acidic residues; it reads FNEDQSEDEFFDSLEDQFI.

Its subcellular location is the cell outer membrane. The protein is Putative outer membrane protein BBA52 of Borreliella burgdorferi (strain ATCC 35210 / DSM 4680 / CIP 102532 / B31) (Borrelia burgdorferi).